The primary structure comprises 154 residues: Protein X (154 aa).

The tract at residues 68 to 117 is mitochondrial targeting sequence; that stretch reads PCALRFTSARRMETTVNAHRNLPKVLHKRTLGLSAMSTTDLEAHFKDCVF.

Belongs to the orthohepadnavirus protein X family. As to quaternary structure, may form homodimer. May interact with host CEBPA, CFLAR, CREB1, DDB1, E4F1, HBXIP, HSPD1/HSP60, NFKBIA, POLR2E and SMAD4. Interacts with host SMC5-SMC6 complex and induces its degradation. Interacts with host TRPC4AP; leading to prevent ubiquitination of TRPC4AP. Interacts with host PLSCR1; this interaction promotes ubiquitination and degradation of HBx and impairs HBx-mediated cell proliferation. Post-translationally, a fraction may be phosphorylated in insect cells and HepG2 cells, a human hepatoblastoma cell line. Phosphorylated in vitro by host protein kinase C or mitogen-activated protein kinase. N-acetylated in insect cells.

The protein localises to the host cytoplasm. It is found in the host nucleus. The protein resides in the host mitochondrion. Its function is as follows. Multifunctional protein that plays a role in silencing host antiviral defenses and promoting viral transcription. Does not seem to be essential for HBV infection. May be directly involved in development of cirrhosis and liver cancer (hepatocellular carcinoma). Most of cytosolic activities involve modulation of cytosolic calcium. The effect on apoptosis is controversial depending on the cell types in which the studies have been conducted. May induce apoptosis by localizing in mitochondria and causing loss of mitochondrial membrane potential. May also modulate apoptosis by binding host CFLAR, a key regulator of the death-inducing signaling complex (DISC). Promotes viral transcription by using the host E3 ubiquitin ligase DDB1 to target the SMC5-SMC6 complex to proteasomal degradation. This host complex would otherwise bind to viral episomal DNA, and prevents its transcription. Moderately stimulates transcription of many different viral and cellular transcription elements. Promoters and enhancers stimulated by HBx contain DNA binding sites for NF-kappa-B, AP-1, AP-2, c-EBP, ATF/CREB, or the calcium-activated factor NF-AT. This Hepatitis B virus genotype B2 (isolate Indonesia/pIDW420/1988) (HBV-B) protein is Protein X.